Consider the following 456-residue polypeptide: Zinc finger C2HC domain-containing protein 1C (456 aa).

2 disordered regions span residues 16–46 (MLPHNTTEAPGPHSAKQDSYEQGDSSQQSLK) and 85–113 (YPHCTGISQQDPESDSQGQGNGLFYSSGP). 2 stretches are compositionally biased toward polar residues: residues 35-46 (YEQGDSSQQSLK) and 90-102 (GISQQDPESDSQG). Positions 211 to 265 (VQIRRLEAAGESLEEEIRRKQILLRGKLKKTEEELRRIQTQKEQAKENENGELQK) form a coiled coil. The interval 336–388 (NKIRDPVSEPSVEKFSPPSETPVGALQGSARNSSLSMAPDSSGSSGSIEEPQL) is disordered. Residues 368 to 382 (SSLSMAPDSSGSSGS) show a composition bias toward low complexity. The C2HC/C3H-type zinc-finger motif lies at 387–416 (QLGECSHCGRKFLSFRLERHSNICSRMRGS). Positions 391, 394, 406, and 410 each coordinate Zn(2+).

The protein belongs to the ZC2HC1 family. The cofactor is Zn(2+).

The polypeptide is Zinc finger C2HC domain-containing protein 1C (ZC2HC1C) (Homo sapiens (Human)).